Reading from the N-terminus, the 912-residue chain is Protein translocase subunit SecA (912 aa).

Residues glutamine 87, 105-109 (GEGKT), and aspartate 508 contribute to the ATP site. The tract at residues 865–912 (DEEAAQVQSGNAPLPVSQVTRDEPKVGRNDPCPCGSGKKYKHCHGQLS) is disordered. Zn(2+) is bound by residues cysteine 896, cysteine 898, cysteine 907, and histidine 908. Residues 902 to 912 (KKYKHCHGQLS) show a composition bias toward basic residues.

It belongs to the SecA family. As to quaternary structure, monomer and homodimer. Part of the essential Sec protein translocation apparatus which comprises SecA, SecYEG and auxiliary proteins SecDF-YajC and YidC. Zn(2+) serves as cofactor.

It is found in the cell inner membrane. The protein resides in the cytoplasm. The enzyme catalyses ATP + H2O + cellular proteinSide 1 = ADP + phosphate + cellular proteinSide 2.. In terms of biological role, part of the Sec protein translocase complex. Interacts with the SecYEG preprotein conducting channel. Has a central role in coupling the hydrolysis of ATP to the transfer of proteins into and across the cell membrane, serving both as a receptor for the preprotein-SecB complex and as an ATP-driven molecular motor driving the stepwise translocation of polypeptide chains across the membrane. The sequence is that of Protein translocase subunit SecA from Xanthomonas oryzae pv. oryzae (strain PXO99A).